The chain runs to 738 residues: Polyribonucleotide nucleotidyltransferase (738 aa).

Mg(2+) is bound by residues Asp-514 and Asp-520. The KH domain maps to 580 to 639 (PRIITVKIPVDKIGEVIGPKGKMINQIQEDTGAEITIEDDGTIYIGAQVGSQAEAARATI). The region spanning 651–723 (GERYLGTVVK…SRGKLSLIPV (73 aa)) is the S1 motif domain.

It belongs to the polyribonucleotide nucleotidyltransferase family. The cofactor is Mg(2+).

It is found in the cytoplasm. The catalysed reaction is RNA(n+1) + phosphate = RNA(n) + a ribonucleoside 5'-diphosphate. Its function is as follows. Involved in mRNA degradation. Catalyzes the phosphorolysis of single-stranded polyribonucleotides processively in the 3'- to 5'-direction. The sequence is that of Polyribonucleotide nucleotidyltransferase from Streptomyces avermitilis (strain ATCC 31267 / DSM 46492 / JCM 5070 / NBRC 14893 / NCIMB 12804 / NRRL 8165 / MA-4680).